Here is a 155-residue protein sequence, read N- to C-terminus: Non-secretory ribonuclease (155 aa).

Positions 1–25 are cleaved as a signal peptide; that stretch reads MGPKLLESRLCLLLLLGLVLMLASC. Lysine 33 contributes to the substrate binding site. The active-site Proton acceptor is histidine 38. The N-linked (GlcNAc...) asparagine glycan is linked to asparagine 41. Intrachain disulfides connect cysteine 47/cysteine 106, cysteine 61/cysteine 118, cysteine 79/cysteine 133, and cysteine 86/cysteine 94. Tyrosine 57 is subject to 3'-nitrotyrosine. A substrate-binding site is contributed by 62-66; that stretch reads KDINT. 3 N-linked (GlcNAc...) asparagine glycosylation sites follow: asparagine 83, asparagine 88, and asparagine 107. Histidine 150 acts as the Proton donor in catalysis.

Belongs to the pancreatic ribonuclease family. In terms of assembly, interacts with and forms a tight 1:1 complex with RNH1. Dimerization of two such complexes may occur.

Its subcellular location is the lysosome. It is found in the cytoplasmic granule. The enzyme catalyses an [RNA] containing cytidine + H2O = an [RNA]-3'-cytidine-3'-phosphate + a 5'-hydroxy-ribonucleotide-3'-[RNA].. It catalyses the reaction an [RNA] containing uridine + H2O = an [RNA]-3'-uridine-3'-phosphate + a 5'-hydroxy-ribonucleotide-3'-[RNA].. Its function is as follows. This is a non-secretory ribonuclease. It is a pyrimidine specific nuclease with a slight preference for U. Cytotoxin and helminthotoxin. Possesses a wide variety of biological activities. This chain is Non-secretory ribonuclease (Rnase2), found in Mus musculus (Mouse).